Consider the following 474-residue polypeptide: Gasdermin-C (474 aa).

Positions 1 to 237 (MLYTFDQVSK…TCAILLSANA (237 aa)) are triggers pyroptosis.

It belongs to the gasdermin family. Homooligomer; homooligomeric ring-shaped pore complex containing 27-28 subunits when inserted in the membrane. In terms of processing, cleavage by CASP8 relieves autoinhibition by releasing the N-terminal moiety (Gasdermin-C, N-terminal) that initiates pyroptosis. Palmitoylated.

It localises to the cytoplasm. It is found in the cytosol. Its subcellular location is the cell membrane. Its activity is regulated as follows. The full-length protein before cleavage is inactive: intramolecular interactions between N- and C-terminal domains mediate autoinhibition in the absence of activation signal. The intrinsic pyroptosis-inducing activity is carried by the released N-terminal moiety (Gasdermin-C, N-terminal) following cleavage by caspase CASP8. In terms of biological role, this form constitutes the precursor of the pore-forming protein: upon cleavage, the released N-terminal moiety (Gasdermin-C, N-terminal) binds to membranes and forms pores, triggering pyroptosis. Pore-forming protein that causes membrane permeabilization and pyroptosis. Produced by the cleavage of gasdermin-C by caspase CASP8 in response to death signals. After cleavage, moves to the plasma membrane where it strongly binds to membrane inner leaflet lipids. Homooligomerizes within the membrane and forms pores of 10-15 nanometers (nm) of inner diameter, triggering pyroptosis. The chain is Gasdermin-C from Rattus norvegicus (Rat).